The chain runs to 392 residues: MLKLFKRIGRKKDSKIEDFYEFGPEIGRGAFSIVRQGTHKDTGDQVAIKAISKQHVSEADMKRFTREIEIMKKLKHKNIIQLIEVFDSNDYLYLVLELIRGGELFDKIVEKGNYSEKDACNLVRQIVSAVEYMHQHGVCHRDLKPENLLCSGDDEKEEIVRIADFGLSKIFEGGEELKTACGTPDYVAPEILECKPYDTSVDMWSIGVITYILLCGFAPFYADTHHELFQKILDLEYDFPEPEWNGITDLAKDFISQLLIINPEERWTASQCIKHPWLAENHGDKELKSLDSAISSMKDYVRNREASTSNILKMRASQSTPNLHSANSNTNTNSLSSSNSNNTTSNSNNNNNNNSNNSNNNNNNSNNNNNINNNNNNNNNNNNNNNNNNNNI.

The 259-residue stretch at 20–278 (YEFGPEIGRG…ASQCIKHPWL (259 aa)) folds into the Protein kinase domain. Residues 26–34 (IGRGAFSIV) and lysine 49 contribute to the ATP site. Residue aspartate 142 is the Proton acceptor of the active site. A compositionally biased stretch (polar residues) spans 317–326 (SQSTPNLHSA). A disordered region spans residues 317 to 392 (SQSTPNLHSA…NNNNNNNNNI (76 aa)). The segment covering 327–392 (NSNTNTNSLS…NNNNNNNNNI (66 aa)) has biased composition (low complexity).

Belongs to the protein kinase superfamily. CAMK Ser/Thr protein kinase family. CaMK subfamily.

The enzyme catalyses L-seryl-[myosin light chain] + ATP = O-phospho-L-seryl-[myosin light chain] + ADP + H(+). It carries out the reaction L-threonyl-[myosin light chain] + ATP = O-phospho-L-threonyl-[myosin light chain] + ADP + H(+). In terms of biological role, may phosphorylate a specific serine in the N-terminus of a myosin light chain. This is Probable myosin light chain kinase DDB_G0271550 from Dictyostelium discoideum (Social amoeba).